The primary structure comprises 93 residues: Large ribosomal subunit protein uL23cz/uL23cy (93 aa).

This sequence belongs to the universal ribosomal protein uL23 family. Part of the 50S ribosomal subunit.

It localises to the plastid. The protein localises to the chloroplast. In terms of biological role, binds to 23S rRNA. This is Large ribosomal subunit protein uL23cz/uL23cy (rpl23-A) from Coffea arabica (Arabian coffee).